The sequence spans 239 residues: Ribosomal RNA small subunit methyltransferase G (239 aa).

S-adenosyl-L-methionine is bound by residues glycine 77, phenylalanine 82, 128–129 (AE), and arginine 146. The tract at residues 215–239 (DKRSQTPKKYPRKPGTPNKSPLLEK) is disordered.

This sequence belongs to the methyltransferase superfamily. RNA methyltransferase RsmG family.

The protein resides in the cytoplasm. Its function is as follows. Specifically methylates the N7 position of guanine in position 535 of 16S rRNA. The protein is Ribosomal RNA small subunit methyltransferase G of Staphylococcus saprophyticus subsp. saprophyticus (strain ATCC 15305 / DSM 20229 / NCIMB 8711 / NCTC 7292 / S-41).